Reading from the N-terminus, the 203-residue chain is Pyridoxine/pyridoxamine 5'-phosphate oxidase (203 aa).

FMN contacts are provided by residues 51-56 (RMVLLK), 66-67 (YT), R72, K73, and Q95. A substrate-binding site is contributed by K56. Y113, R117, and S121 together coordinate substrate. FMN is bound by residues 130–131 (QS) and W175. 181–183 (RLH) serves as a coordination point for substrate. An FMN-binding site is contributed by R185.

The protein belongs to the pyridoxamine 5'-phosphate oxidase family. As to quaternary structure, homodimer. FMN serves as cofactor.

The catalysed reaction is pyridoxamine 5'-phosphate + O2 + H2O = pyridoxal 5'-phosphate + H2O2 + NH4(+). It catalyses the reaction pyridoxine 5'-phosphate + O2 = pyridoxal 5'-phosphate + H2O2. Its pathway is cofactor metabolism; pyridoxal 5'-phosphate salvage; pyridoxal 5'-phosphate from pyridoxamine 5'-phosphate: step 1/1. It functions in the pathway cofactor metabolism; pyridoxal 5'-phosphate salvage; pyridoxal 5'-phosphate from pyridoxine 5'-phosphate: step 1/1. Functionally, catalyzes the oxidation of either pyridoxine 5'-phosphate (PNP) or pyridoxamine 5'-phosphate (PMP) into pyridoxal 5'-phosphate (PLP). The sequence is that of Pyridoxine/pyridoxamine 5'-phosphate oxidase from Novosphingobium aromaticivorans (strain ATCC 700278 / DSM 12444 / CCUG 56034 / CIP 105152 / NBRC 16084 / F199).